Reading from the N-terminus, the 250-residue chain is tRNA pseudouridine synthase A (250 aa).

Catalysis depends on D52, which acts as the Nucleophile. Y111 contacts substrate.

It belongs to the tRNA pseudouridine synthase TruA family. In terms of assembly, homodimer.

It carries out the reaction uridine(38/39/40) in tRNA = pseudouridine(38/39/40) in tRNA. Its function is as follows. Formation of pseudouridine at positions 38, 39 and 40 in the anticodon stem and loop of transfer RNAs. This Methylorubrum extorquens (strain PA1) (Methylobacterium extorquens) protein is tRNA pseudouridine synthase A.